We begin with the raw amino-acid sequence, 283 residues long: Putative UTP--glucose-1-phosphate uridylyltransferase (283 aa).

This sequence belongs to the UDPGP type 2 family.

The catalysed reaction is alpha-D-glucose 1-phosphate + UTP + H(+) = UDP-alpha-D-glucose + diphosphate. The chain is Putative UTP--glucose-1-phosphate uridylyltransferase from Methanocaldococcus jannaschii (strain ATCC 43067 / DSM 2661 / JAL-1 / JCM 10045 / NBRC 100440) (Methanococcus jannaschii).